A 310-amino-acid polypeptide reads, in one-letter code: Ribose-phosphate pyrophosphokinase (310 aa).

Residues 34-36 (DQE) and 93-94 (RQ) each bind ATP. Residues H127 and D167 each coordinate Mg(2+). The active site involves K190. Residues R192, D216, and 220–224 (DSGGT) contribute to the D-ribose 5-phosphate site.

It belongs to the ribose-phosphate pyrophosphokinase family. Class I subfamily. Homohexamer. Mg(2+) is required as a cofactor.

Its subcellular location is the cytoplasm. The enzyme catalyses D-ribose 5-phosphate + ATP = 5-phospho-alpha-D-ribose 1-diphosphate + AMP + H(+). It participates in metabolic intermediate biosynthesis; 5-phospho-alpha-D-ribose 1-diphosphate biosynthesis; 5-phospho-alpha-D-ribose 1-diphosphate from D-ribose 5-phosphate (route I): step 1/1. Its function is as follows. Involved in the biosynthesis of the central metabolite phospho-alpha-D-ribosyl-1-pyrophosphate (PRPP) via the transfer of pyrophosphoryl group from ATP to 1-hydroxyl of ribose-5-phosphate (Rib-5-P). This Brucella melitensis biotype 1 (strain ATCC 23456 / CCUG 17765 / NCTC 10094 / 16M) protein is Ribose-phosphate pyrophosphokinase.